Consider the following 339-residue polypeptide: Phosphate acyltransferase (339 aa).

It belongs to the PlsX family. As to quaternary structure, homodimer. Probably interacts with PlsY.

The protein localises to the cytoplasm. The catalysed reaction is a fatty acyl-[ACP] + phosphate = an acyl phosphate + holo-[ACP]. It functions in the pathway lipid metabolism; phospholipid metabolism. Functionally, catalyzes the reversible formation of acyl-phosphate (acyl-PO(4)) from acyl-[acyl-carrier-protein] (acyl-ACP). This enzyme utilizes acyl-ACP as fatty acyl donor, but not acyl-CoA. The protein is Phosphate acyltransferase of Tolumonas auensis (strain DSM 9187 / NBRC 110442 / TA 4).